Reading from the N-terminus, the 218-residue chain is ATP-dependent dethiobiotin synthetase BioD (218 aa).

An ATP-binding site is contributed by 10–15 (NAGKTT). Threonine 14 provides a ligand contact to Mg(2+). Residue lysine 35 is part of the active site. Threonine 39 serves as a coordination point for substrate. Mg(2+)-binding residues include histidine 52 and glutamate 116. ATP is bound by residues 116 to 119 (EGAG) and 176 to 177 (LR).

This sequence belongs to the dethiobiotin synthetase family. As to quaternary structure, homodimer. Mg(2+) serves as cofactor.

It is found in the cytoplasm. It catalyses the reaction (7R,8S)-7,8-diammoniononanoate + CO2 + ATP = (4R,5S)-dethiobiotin + ADP + phosphate + 3 H(+). It participates in cofactor biosynthesis; biotin biosynthesis; biotin from 7,8-diaminononanoate: step 1/2. Its function is as follows. Catalyzes a mechanistically unusual reaction, the ATP-dependent insertion of CO2 between the N7 and N8 nitrogen atoms of 7,8-diaminopelargonic acid (DAPA, also called 7,8-diammoniononanoate) to form a ureido ring. This Helicobacter pylori (strain Shi470) protein is ATP-dependent dethiobiotin synthetase BioD.